The sequence spans 389 residues: Chalcone synthase A (389 aa).

Cys164 is an active-site residue.

This sequence belongs to the thiolase-like superfamily. Chalcone/stilbene synthases family. In terms of tissue distribution, major expressed member of the gene family in various floral tissues and in seedlings treated with UV light. It is relatively low expressed in tissue culture material.

It carries out the reaction (E)-4-coumaroyl-CoA + 3 malonyl-CoA + 3 H(+) = 2',4,4',6'-tetrahydroxychalcone + 3 CO2 + 4 CoA. The protein operates within secondary metabolite biosynthesis; flavonoid biosynthesis. In terms of biological role, the primary product of this enzyme is 4,2',4',6'-tetrahydroxychalcone (also termed naringenin-chalcone or chalcone) which can under specific conditions spontaneously isomerize into naringenin. This is Chalcone synthase A (CHSA) from Petunia hybrida (Petunia).